The chain runs to 91 residues: Potassium channel toxin TtrKIK (91 aa).

The first 25 residues, 1-25 (MVATNRCCVFALLFALLLVHSLTEA), serve as a signal peptide directing secretion. A propeptide spanning residues 26 to 44 (GKGKEVLGKIKDKLIEAKD) is cleaved from the precursor. In terms of domain architecture, BetaSPN-type CS-alpha/beta spans 58 to 91 (EYACPAIEKFCEDHCAAKKAVGKCDDFKCNCIKL). 3 disulfide bridges follow: Cys-61–Cys-81, Cys-68–Cys-86, and Cys-72–Cys-88.

This sequence belongs to the long chain scorpion toxin family. Class 2 subfamily. Expressed by the venom gland.

It localises to the secreted. In terms of biological role, the full peptide presents antibacterial and cytotoxic activities. The synthetic C-terminus (AA 33-76) inhibits voltage-gated potassium channels Kv1.1/KCNA1, Kv1.2/KCNA2, and Kv1.3/KCNA3. The protein is Potassium channel toxin TtrKIK of Tityus trivittatus (Argentinean scorpion).